The chain runs to 418 residues: NADH-quinone oxidoreductase subunit D (418 aa).

This sequence belongs to the complex I 49 kDa subunit family. As to quaternary structure, NDH-1 is composed of 14 different subunits. Subunits NuoB, C, D, E, F, and G constitute the peripheral sector of the complex.

The protein localises to the cell inner membrane. The catalysed reaction is a quinone + NADH + 5 H(+)(in) = a quinol + NAD(+) + 4 H(+)(out). Its function is as follows. NDH-1 shuttles electrons from NADH, via FMN and iron-sulfur (Fe-S) centers, to quinones in the respiratory chain. The immediate electron acceptor for the enzyme in this species is believed to be ubiquinone. Couples the redox reaction to proton translocation (for every two electrons transferred, four hydrogen ions are translocated across the cytoplasmic membrane), and thus conserves the redox energy in a proton gradient. The polypeptide is NADH-quinone oxidoreductase subunit D (Neisseria gonorrhoeae (strain ATCC 700825 / FA 1090)).